Consider the following 488-residue polypeptide: Glutamyl-tRNA(Gln) amidotransferase subunit A (488 aa).

Catalysis depends on charge relay system residues K77 and S152. S176 serves as the catalytic Acyl-ester intermediate.

The protein belongs to the amidase family. GatA subfamily. Heterotrimer of A, B and C subunits.

It catalyses the reaction L-glutamyl-tRNA(Gln) + L-glutamine + ATP + H2O = L-glutaminyl-tRNA(Gln) + L-glutamate + ADP + phosphate + H(+). Its function is as follows. Allows the formation of correctly charged Gln-tRNA(Gln) through the transamidation of misacylated Glu-tRNA(Gln) in organisms which lack glutaminyl-tRNA synthetase. The reaction takes place in the presence of glutamine and ATP through an activated gamma-phospho-Glu-tRNA(Gln). The polypeptide is Glutamyl-tRNA(Gln) amidotransferase subunit A (Streptococcus pneumoniae serotype 19F (strain G54)).